The primary structure comprises 454 residues: Probable ECA polymerase (454 aa).

Helical transmembrane passes span Leu-3–Leu-23, Phe-39–Phe-59, Phe-61–Phe-81, Leu-119–Phe-139, Gly-154–Leu-174, Ala-180–Gly-200, Gly-201–Gly-221, Trp-222–Leu-242, Leu-340–Ile-360, Tyr-377–Ala-397, and Val-409–Phe-429.

Belongs to the WzyE family. Probably part of a complex composed of WzxE, WzyE and WzzE.

The protein resides in the cell inner membrane. It functions in the pathway bacterial outer membrane biogenesis; enterobacterial common antigen biosynthesis. Probably involved in the polymerization of enterobacterial common antigen (ECA) trisaccharide repeat units. This chain is Probable ECA polymerase, found in Yersinia pestis bv. Antiqua (strain Angola).